Reading from the N-terminus, the 737-residue chain is MGGCTVKPQLLLLALVLHPWNPCLGADSEKPSSIPTDKLLVITVATKESDGFHRFMQSAKYFNYTVKVLGQGEEWRGGDGINSIGGGQKVRLMKEVMEHYADQDDLVVMFTECFDVIFAGGPEEVLKKFQKANHKVVFAADGILWPDKRLADKYPVVHIGKRYLNSGGFIGYAPYVNRIVQQWNLQDNDDDQLFYTKVYIDPLKREAINITLDHKCKIFQTLNGAVDEVVLKFENGKARAKNTFYETLPVAINGNGPTKILLNYFGNYVPNSWTQDNGCTLCEFDTVDLSAVDVHPNVSIGVFIEQPTPFLPRFLDILLTLDYPKEALKLFIHNKEVYHEKDIKVFFDKAKHEIKTIKIVGPEENLSQAEARNMGMDFCRQDEKCDYYFSVDADVVLTNPRTLKILIEQNRKIIAPLVTRHGKLWSNFWGALSPDGYYARSEDYVDIVQGNRVGVWNVPYMANVYLIKGKTLRSEMNERNYFVRDKLDPDMALCRNAREMGVFMYISNRHEFGRLLSTANYNTSHYNNDLWQIFENPVDWKEKYINRDYSKIFTENIVEQPCPDVFWFPIFSEKACDELVEEMEHYGKWSGGKHHDSRISGGYENVPTDDIHMKQVDLENVWLHFIREFIAPVTLKVFAGYYTKGFALLNFVVKYSPERQRSLRPHHDASTFTINIALNNVGEDFQGGGCKFLRYNCSIESPRKGWSFMHPGRLTHLHEGLPVKNGTRYIAVSFIDP.

The first 25 residues, 1–25 (MGGCTVKPQLLLLALVLHPWNPCLG), serve as a signal peptide directing secretion. 3 N-linked (GlcNAc...) asparagine glycosylation sites follow: N63, N209, and N297. T320 is modified (phosphothreonine). At Y323 the chain carries Phosphotyrosine. N-linked (GlcNAc...) asparagine glycosylation is found at N365 and N522. The 94-residue stretch at 644 to 737 (KGFALLNFVV…RYIAVSFIDP (94 aa)) folds into the Fe2OG dioxygenase domain. H666 and D668 together coordinate Fe cation. An N-linked (GlcNAc...) asparagine glycan is attached at N696. Position 704 is an N6-succinyllysine (K704). H718 contributes to the Fe cation binding site. Residue N725 is glycosylated (N-linked (GlcNAc...) asparagine). Residue R728 is part of the active site.

As to quaternary structure, homodimer. It depends on Fe(2+) as a cofactor. L-ascorbate serves as cofactor. Highly expressed in pancreas and muscle. Isoform 1 and isoform 2 are expressed in the majority of the examined cell types. Isoform 2 is specifically expressed in skin, lung, dura and aorta.

It localises to the rough endoplasmic reticulum membrane. The enzyme catalyses L-lysyl-[collagen] + 2-oxoglutarate + O2 = (5R)-5-hydroxy-L-lysyl-[collagen] + succinate + CO2. Functionally, forms hydroxylysine residues in -Xaa-Lys-Gly- sequences in collagens. These hydroxylysines serve as sites of attachment for carbohydrate units and are essential for the stability of the intermolecular collagen cross-links. The polypeptide is Procollagen-lysine,2-oxoglutarate 5-dioxygenase 2 (Homo sapiens (Human)).